Reading from the N-terminus, the 284-residue chain is MAPRQKKPNKSDDDDGDLHRKKQSFFKQRFPGFKKKASELSVLCGNSVGFICYGPDNDLHVWPQSQDHNPQALHEIVAKFNALSDERRKNHACDLNDFPHHLKGLSREELRKHLLHLDSQLLGVREQKIEILKKTLTGSSEKDGARVSENSAISDHKLKIEPNLTDILSEDHLIRVSDKKLGSCDVFDELAYVVRGSRNLNENVSNYESKDAAYTGMDHLGTFGGNYLQEAAAELYQTYNLGNFCDDHVWDLEFASRLPPLHTFSDPLMTTNTCQTMSSDMISI.

The disordered stretch occupies residues 1–20; sequence MAPRQKKPNKSDDDDGDLHR. An MADS-box domain is found at 21 to 66; that stretch reads KKQSFFKQRFPGFKKKASELSVLCGNSVGFICYGPDNDLHVWPQSQ.

Interacts with MEE14/CBP1.

It is found in the nucleus. Functionally, probable transcription factor that may function in the maintenance of the proper function of the central cell in pollen tube attraction. This chain is Agamous-like MADS-box protein AGL49, found in Arabidopsis thaliana (Mouse-ear cress).